A 272-amino-acid chain; its full sequence is MTREITIGSVKIGGDRPLVLIAGPCVIENEAATLRCAERLMTICNGVSVSLVFKASYDKANRTSVTSFRGPGMQEGLRILQKVKDSLGIPVISDIHSIEQVKPAAEVLDIIQVPAFLCRQTDLVVEVGRTNRVVNVKKGQFMAPWDMENVVGKILSTGNERIILTERGVTFGYNNLVSDMRSLPIMRRIGFPVVFDATHSVQLPGGQGGSSGGQREFVEYLSRAAVATGIDGIFMEVHEDPEKALCDGPNSVKLDDLPALLKKLKAIDAIVK.

The protein belongs to the KdsA family.

Its subcellular location is the cytoplasm. The enzyme catalyses D-arabinose 5-phosphate + phosphoenolpyruvate + H2O = 3-deoxy-alpha-D-manno-2-octulosonate-8-phosphate + phosphate. The protein operates within carbohydrate biosynthesis; 3-deoxy-D-manno-octulosonate biosynthesis; 3-deoxy-D-manno-octulosonate from D-ribulose 5-phosphate: step 2/3. It participates in bacterial outer membrane biogenesis; lipopolysaccharide biosynthesis. The protein is 2-dehydro-3-deoxyphosphooctonate aldolase of Geobacter sulfurreducens (strain ATCC 51573 / DSM 12127 / PCA).